The following is a 182-amino-acid chain: uncharacterized protein (182 aa).

It is found in the mitochondrion. This is an uncharacterized protein from Schizosaccharomyces pombe (strain 972 / ATCC 24843) (Fission yeast).